Here is a 151-residue protein sequence, read N- to C-terminus: Large ribosomal subunit protein bL9 (151 aa).

It belongs to the bacterial ribosomal protein bL9 family.

Its function is as follows. Binds to the 23S rRNA. The polypeptide is Large ribosomal subunit protein bL9 (Mycolicibacterium smegmatis (strain ATCC 700084 / mc(2)155) (Mycobacterium smegmatis)).